A 436-amino-acid chain; its full sequence is GTPase Der (436 aa).

EngA-type G domains follow at residues 4 to 167 (PIVA…PDEA) and 175 to 351 (IRFS…DNHR). Residues 10–17 (GRPNVGKS), 57–61 (DTGGI), 119–122 (NKVD), 181–188 (GRPNVGKS), 229–233 (DTAGM), and 294–297 (NKWD) contribute to the GTP site. The 85-residue stretch at 352–436 (KRITSSTLND…PIKLIVRARK (85 aa)) folds into the KH-like domain.

This sequence belongs to the TRAFAC class TrmE-Era-EngA-EngB-Septin-like GTPase superfamily. EngA (Der) GTPase family. As to quaternary structure, associates with the 50S ribosomal subunit.

Functionally, GTPase that plays an essential role in the late steps of ribosome biogenesis. The sequence is that of GTPase Der from Leuconostoc mesenteroides subsp. mesenteroides (strain ATCC 8293 / DSM 20343 / BCRC 11652 / CCM 1803 / JCM 6124 / NCDO 523 / NBRC 100496 / NCIMB 8023 / NCTC 12954 / NRRL B-1118 / 37Y).